Reading from the N-terminus, the 178-residue chain is Ribulose bisphosphate carboxylase small subunit, chloroplastic (178 aa).

Residues 1–54 constitute a chloroplast transit peptide; it reads MASISSSVATVSRTAPAQANMVAPFTGLKSNAAFPTTKKANDFSTLPSNGGRVQ.

Belongs to the RuBisCO small chain family. As to quaternary structure, heterohexadecamer of 8 large and 8 small subunits.

It is found in the plastid. It localises to the chloroplast. In terms of biological role, ruBisCO catalyzes two reactions: the carboxylation of D-ribulose 1,5-bisphosphate, the primary event in carbon dioxide fixation, as well as the oxidative fragmentation of the pentose substrate. Both reactions occur simultaneously and in competition at the same active site. Although the small subunit is not catalytic it is essential for maximal activity. This chain is Ribulose bisphosphate carboxylase small subunit, chloroplastic, found in Helianthus annuus (Common sunflower).